Consider the following 836-residue polypeptide: Exonuclease 1 (836 aa).

The N-domain stretch occupies residues 1 to 99 (MGIQGLLPQL…TKRERSRKEN (99 aa)). Mg(2+) contacts are provided by D30 and D78. The tract at residues 82-108 (LPMKGDQETKRERSRKENLERAKEHES) is disordered. Over residues 84–108 (MKGDQETKRERSRKENLERAKEHES) the composition is skewed to basic and acidic residues. The segment at 138–230 (KQEKVDYIVA…ILSGCDYLPS (93 aa)) is I-domain. Mg(2+) is bound by residues E150, D152, D171, D173, and D226. Disordered regions lie at residues 464 to 488 (RDDSASVSPQCSHDIGSDPAEDPDI), 568 to 641 (EDEC…TNSE), and 744 to 836 (TASA…TSRS). Over residues 568-577 (EDECHDEDNC) the composition is skewed to acidic residues. Composition is skewed to polar residues over residues 578-592 (ETGNYTLPGDQQRSS) and 744-758 (TASAHSDQGKITSKA).

This sequence belongs to the XPG/RAD2 endonuclease family. EXO1 subfamily. It depends on Mg(2+) as a cofactor.

The protein localises to the nucleus. In terms of biological role, putative 5'-&gt;3' double-stranded DNA exonuclease which may also contain a cryptic 3'-&gt;5' double-stranded DNA exonuclease activity. May be involved in DNA mismatch repair (MMR). The polypeptide is Exonuclease 1 (EXO1) (Oryza sativa subsp. japonica (Rice)).